The chain runs to 298 residues: Mitochondrial distribution and morphology protein 12 (298 aa).

One can recognise an SMP-LTD domain in the interval 1–298; the sequence is MSIELDWTGL…VYPHFYTLYL (298 aa). The tract at residues 118-142 is disordered; sequence SEHEESLSRWSDTESETGTCDSSSL. Over residues 133 to 142 the composition is skewed to polar residues; it reads ETGTCDSSSL.

It belongs to the MDM12 family. In terms of assembly, component of the ER-mitochondria encounter structure (ERMES) or MDM complex, composed of MMM1, MDM10, MDM12 and MDM34. An MMM1 homodimer associates with one molecule of MDM12 on each side in a pairwise head-to-tail manner, and the SMP-LTD domains of MMM1 and MDM12 generate a continuous hydrophobic tunnel for phospholipid trafficking.

It is found in the mitochondrion outer membrane. The protein resides in the endoplasmic reticulum membrane. Functionally, component of the ERMES/MDM complex, which serves as a molecular tether to connect the endoplasmic reticulum (ER) and mitochondria. Components of this complex are involved in the control of mitochondrial shape and protein biogenesis, and function in nonvesicular lipid trafficking between the ER and mitochondria. MDM12 is required for the interaction of the ER-resident membrane protein MMM1 and the outer mitochondrial membrane-resident beta-barrel protein MDM10. The MDM12-MMM1 subcomplex functions in the major beta-barrel assembly pathway that is responsible for biogenesis of all mitochondrial outer membrane beta-barrel proteins, and acts in a late step after the SAM complex. The MDM10-MDM12-MMM1 subcomplex further acts in the TOM40-specific pathway after the action of the MDM12-MMM1 complex. Essential for establishing and maintaining the structure of mitochondria and maintenance of mtDNA nucleoids. This is Mitochondrial distribution and morphology protein 12 from Malassezia globosa (strain ATCC MYA-4612 / CBS 7966) (Dandruff-associated fungus).